Here is a 473-residue protein sequence, read N- to C-terminus: Bifunctional protein HldE (473 aa).

The segment at 1-317 is ribokinase; it reads MKLSMPRFDQ…RRAIQREEGS (317 aa). Residue 194 to 197 coordinates ATP; that stretch reads NLSE. The active site involves Asp-263. The cytidylyltransferase stretch occupies residues 343–473; it reads FTNGCFDILH…TAIVEKIRKN (131 aa).

The protein in the N-terminal section; belongs to the carbohydrate kinase PfkB family. It in the C-terminal section; belongs to the cytidylyltransferase family. Homodimer.

The enzyme catalyses D-glycero-beta-D-manno-heptose 7-phosphate + ATP = D-glycero-beta-D-manno-heptose 1,7-bisphosphate + ADP + H(+). The catalysed reaction is D-glycero-beta-D-manno-heptose 1-phosphate + ATP + H(+) = ADP-D-glycero-beta-D-manno-heptose + diphosphate. It functions in the pathway nucleotide-sugar biosynthesis; ADP-L-glycero-beta-D-manno-heptose biosynthesis; ADP-L-glycero-beta-D-manno-heptose from D-glycero-beta-D-manno-heptose 7-phosphate: step 1/4. It participates in nucleotide-sugar biosynthesis; ADP-L-glycero-beta-D-manno-heptose biosynthesis; ADP-L-glycero-beta-D-manno-heptose from D-glycero-beta-D-manno-heptose 7-phosphate: step 3/4. In terms of biological role, catalyzes the phosphorylation of D-glycero-D-manno-heptose 7-phosphate at the C-1 position to selectively form D-glycero-beta-D-manno-heptose-1,7-bisphosphate. Functionally, catalyzes the ADP transfer from ATP to D-glycero-beta-D-manno-heptose 1-phosphate, yielding ADP-D-glycero-beta-D-manno-heptose. This is Bifunctional protein HldE from Pseudomonas putida (strain W619).